The following is a 339-amino-acid chain: DNA-directed RNA polymerase subunit alpha (339 aa).

An alpha N-terminal domain (alpha-NTD) region spans residues 1-235 (MVIQKNWQEL…DQLQVFVNFE (235 aa)). Residues 251 to 339 (FNPALLKKVD…DLAKRFEEHY (89 aa)) are alpha C-terminal domain (alpha-CTD).

It belongs to the RNA polymerase alpha chain family. In terms of assembly, homodimer. The RNAP catalytic core consists of 2 alpha, 1 beta, 1 beta' and 1 omega subunit. When a sigma factor is associated with the core the holoenzyme is formed, which can initiate transcription.

The enzyme catalyses RNA(n) + a ribonucleoside 5'-triphosphate = RNA(n+1) + diphosphate. Functionally, DNA-dependent RNA polymerase catalyzes the transcription of DNA into RNA using the four ribonucleoside triphosphates as substrates. The polypeptide is DNA-directed RNA polymerase subunit alpha (Methylorubrum populi (strain ATCC BAA-705 / NCIMB 13946 / BJ001) (Methylobacterium populi)).